A 47-amino-acid chain; its full sequence is MAHKCASAKLLSGIMALLFNGKSLLRPICLHVHNHLVSNSDTNIVWP.

An N-terminal signal peptide occupies residues 1–25; sequence MAHKCASAKLLSGIMALLFNGKSLL.

This is an uncharacterized protein from Saccharomyces cerevisiae (strain ATCC 204508 / S288c) (Baker's yeast).